Consider the following 412-residue polypeptide: Palmitoyltransferase swf1 (412 aa).

At 1-2 (MG) the chain is on the lumenal side. Residues 3 to 23 (LLRTIALVILGFSAFIFTVLF) traverse the membrane as a helical segment. The Cytoplasmic portion of the chain corresponds to 24-78 (GRLPVFRKTPIGLLHRIIWLHIPHGISYIDARLFNGRILRSWGQAGNYILYENHP). The chain crosses the membrane as a helical span at residues 79 to 99 (LVLIFFTTILVIGELIFIPSA). The Lumenal segment spans residues 100-107 (WPRISVMH). A helical transmembrane segment spans residues 108 to 128 (QLYIPIIIALPYYFLYVSVVT). At 129–198 (KSYITPDNHA…TNCVGLNNYH (70 aa)) the chain is on the cytoplasmic side. A DHHC domain is found at 155-205 (HSCETCHFLKPARSKHCSYCKRCVSRQDHHCIWLTNCVGLNNYHYFLYLLL). The helical transmembrane segment at 199–219 (YFLYLLLSLSVMLTYGSWLGY) threads the bilayer. Topologically, residues 220–265 (SLLSQTLDRLIPPSSPVRLRKQSWPTFLNMWAAVVAYDTRIGGVTM) are lumenal. Residues 266-286 (LMFMTAPLAFAFLVYHVYLIW) form a helical membrane-spanning segment. At 287 to 412 (AGMTTNESAK…NYAAGKAHRA (126 aa)) the chain is on the cytoplasmic side.

The protein belongs to the DHHC palmitoyltransferase family. SWF1 subfamily.

The protein localises to the endoplasmic reticulum membrane. The catalysed reaction is L-cysteinyl-[protein] + hexadecanoyl-CoA = S-hexadecanoyl-L-cysteinyl-[protein] + CoA. Functionally, palmitoyltransferase that targets several endosomal SNAREs. Palmitoylates the SNAREs at cysteine residues close to the cytoplasmic end of their transmembrane domain. May have a role in the cellular quality control of transmembrane domain-containing proteins. The protein is Palmitoyltransferase swf1 (swf1) of Emericella nidulans (strain FGSC A4 / ATCC 38163 / CBS 112.46 / NRRL 194 / M139) (Aspergillus nidulans).